A 307-amino-acid chain; its full sequence is Voltage-dependent anion channel-forming protein alr2987 (307 aa).

4 helical membrane-spanning segments follow: residues 19-39 (VIGA…LVTL), 47-67 (VSQP…LLVF), 209-229 (PLAY…LLPF), and 238-258 (WTGL…AIGL).

The protein belongs to the anion channel-forming bestrophin (TC 1.A.46) family.

It localises to the cell membrane. This is Voltage-dependent anion channel-forming protein alr2987 from Nostoc sp. (strain PCC 7120 / SAG 25.82 / UTEX 2576).